The chain runs to 628 residues: FAD-linked oxidoreductase easE (628 aa).

A signal peptide spans 1 to 20; the sequence is MSHRILCVAFCVCSLVAVSS. Residues 144–328 form the FAD-binding PCMH-type domain; the sequence is HQGRIPLYSA…TRATMRVHLN (185 aa). A Pros-8alpha-FAD histidine modification is found at H182. N-linked (GlcNAc...) asparagine glycosylation is found at N343, N382, and N487.

The protein belongs to the oxygen-dependent FAD-linked oxidoreductase family. FAD is required as a cofactor.

It participates in alkaloid biosynthesis; ergot alkaloid biosynthesis. Functionally, FAD binding oxidoreductase; part of the gene cluster that mediates the biosynthesis of fumiclavanine C, a fungal ergot alkaloid. DmaW catalyzes the first step of ergot alkaloid biosynthesis by condensing dimethylallyl diphosphate (DMAP) and tryptophan to form 4-dimethylallyl-L-tryptophan. The second step is catalyzed by the methyltransferase easF that methylates 4-dimethylallyl-L-tryptophan in the presence of S-adenosyl-L-methionine, resulting in the formation of 4-dimethylallyl-L-abrine. The catalase easC and the FAD-dependent oxidoreductase easE then transform 4-dimethylallyl-L-abrine to chanoclavine-I which is further oxidized by EasD in the presence of NAD(+), resulting in the formation of chanoclavine-I aldehyde. EasA reduces chanoclavine-I aldehyde to dihydrochanoclavine-I aldehyde that spontaneously dehydrates to form 6,8-dimethyl-6,7-didehydroergoline. EasG then catalyzes the reduction of 6,8-dimethyl-6,7-didehydroergoline to form festuclavine. Hydrolysis of festuclavine by easM then leads to the formation of fumigaclavine B which is in turn acetylated by easN to fumigaclavine A. Finally, easL catalyzes the conversion of fumigaclavine A into fumigaclavine C by attaching a dimethylallyl moiety to C-2 of the indole nucleus. In Aspergillus fumigatus (strain ATCC MYA-4609 / CBS 101355 / FGSC A1100 / Af293) (Neosartorya fumigata), this protein is FAD-linked oxidoreductase easE.